The chain runs to 159 residues: Transcription elongation factor GreA (159 aa).

It belongs to the GreA/GreB family.

In terms of biological role, necessary for efficient RNA polymerase transcription elongation past template-encoded arresting sites. The arresting sites in DNA have the property of trapping a certain fraction of elongating RNA polymerases that pass through, resulting in locked ternary complexes. Cleavage of the nascent transcript by cleavage factors such as GreA or GreB allows the resumption of elongation from the new 3'terminus. GreA releases sequences of 2 to 3 nucleotides. The chain is Transcription elongation factor GreA from Orientia tsutsugamushi (strain Boryong) (Rickettsia tsutsugamushi).